A 392-amino-acid chain; its full sequence is Anhydro-N-acetylmuramic acid kinase (392 aa).

22–29 (GTSMDGVD) lines the ATP pocket.

The protein belongs to the anhydro-N-acetylmuramic acid kinase family.

The catalysed reaction is 1,6-anhydro-N-acetyl-beta-muramate + ATP + H2O = N-acetyl-D-muramate 6-phosphate + ADP + H(+). Its pathway is amino-sugar metabolism; 1,6-anhydro-N-acetylmuramate degradation. The protein operates within cell wall biogenesis; peptidoglycan recycling. Its function is as follows. Catalyzes the specific phosphorylation of 1,6-anhydro-N-acetylmuramic acid (anhMurNAc) with the simultaneous cleavage of the 1,6-anhydro ring, generating MurNAc-6-P. Is required for the utilization of anhMurNAc either imported from the medium or derived from its own cell wall murein, and thus plays a role in cell wall recycling. This chain is Anhydro-N-acetylmuramic acid kinase, found in Burkholderia mallei (strain NCTC 10229).